A 532-amino-acid chain; its full sequence is tRNA-2-methylthio-N(6)-dimethylallyladenosine synthase 2 (532 aa).

A disordered region spans residues 1 to 21 (MTSTVAHGAGSAGPADDAEPM). An MTTase N-terminal domain is found at 24-140 (RTYQVRTYGC…LPALLDRARH (117 aa)). Residues Cys33, Cys69, Cys103, Cys177, Cys181, and Cys184 each coordinate [4Fe-4S] cluster. A Radical SAM core domain is found at 163 to 399 (RESAYAAWVS…VELQEQISLE (237 aa)). In terms of domain architecture, TRAM spans 402–470 (RAIVGQRVEL…PHHLIADGGI (69 aa)). Positions 510-532 (TSCGSAGGCGSADGAGSSAGDPQ) are disordered. Low complexity predominate over residues 523–532 (GAGSSAGDPQ).

The protein belongs to the methylthiotransferase family. MiaB subfamily. In terms of assembly, monomer. The cofactor is [4Fe-4S] cluster.

It is found in the cytoplasm. It catalyses the reaction N(6)-dimethylallyladenosine(37) in tRNA + (sulfur carrier)-SH + AH2 + 2 S-adenosyl-L-methionine = 2-methylsulfanyl-N(6)-dimethylallyladenosine(37) in tRNA + (sulfur carrier)-H + 5'-deoxyadenosine + L-methionine + A + S-adenosyl-L-homocysteine + 2 H(+). Functionally, catalyzes the methylthiolation of N6-(dimethylallyl)adenosine (i(6)A), leading to the formation of 2-methylthio-N6-(dimethylallyl)adenosine (ms(2)i(6)A) at position 37 in tRNAs that read codons beginning with uridine. The sequence is that of tRNA-2-methylthio-N(6)-dimethylallyladenosine synthase 2 from Mycobacterium marinum (strain ATCC BAA-535 / M).